The primary structure comprises 125 residues: MINSPRVCIQVQSVYIEAQSSPDNERYVFAYTVTIRNLGRAPVQLLGRYWLITNGNGRETEVQGEGVVGVQPLIAPGEEYQYTSGAIIETPLGTMQGHYEMIDENGVPFSIDIPVFRLAVPTLIH.

Residues 1-125 (MINSPRVCIQ…FRLAVPTLIH (125 aa)) form the ApaG domain.

This is Protein ApaG from Escherichia coli (strain SE11).